The following is a 645-amino-acid chain: MNVINCEEVKRDEFHTEKYYESYNIFGAHIVTEDEMRGVRFTVWAPHAKAMSVVGDFNEWDYEQHKMLQVTEEGIWSLFIPHIEEKEIYKYAIETMAGDVIFKADPYAVYAEVRPNTASVVFDIKGYEWNDKNWSRKKKKKSVYKEAMTVYELHFGSWKKKEDGTLYSYREMAEELIPYVVEHQFTHIEIMPLVEHPYDRSWGYQGTGYYAATSRFGTPHDLMHFVDECHKYGIGVILDWVPGHFCKDAHGLYLFDGTPTYEYKDKDVQENPVWGTVNFDLGKREVRNFLISNALFWMRYFHIDGFRVDAVANMLYWNKEGQEQSNEHAVSFLRELNEAVFAEDEDFLMTAEDSTAWPLVTAPTYEGGLGFNYKWNMGWMNDVLKYMECAPEYRKYIHEKMTFSLLYAYSENFILPLSHDEVVHGKKSLLNKMPGDYWDKFAQLRLLYGYFFTHPGKKLLFMGGEFGQFDEWKDLEDLDWNLHDFEMHRYMHDYFKELIALYKRSKPLWQLDHSPEGFQWIDANNNEQSIFSFIRQGDKQEDALVVVCNFTKATYENYKVGVPDFEYYNEVLNSDAEQYGGSGQVNKKRLKAIQEPFHNQAAHVEITIPPFGVSILRPVKTRKGSKKQDGSKTKVRSNVTSRGKR.

The active-site Nucleophile is the Asp-309. The active-site Proton donor is the Glu-352. The interval 619–645 (VKTRKGSKKQDGSKTKVRSNVTSRGKR) is disordered. The span at 636 to 645 (RSNVTSRGKR) shows a compositional bias: polar residues.

This sequence belongs to the glycosyl hydrolase 13 family. GlgB subfamily. As to quaternary structure, monomer.

The enzyme catalyses Transfers a segment of a (1-&gt;4)-alpha-D-glucan chain to a primary hydroxy group in a similar glucan chain.. The protein operates within glycan biosynthesis; glycogen biosynthesis. In terms of biological role, catalyzes the formation of the alpha-1,6-glucosidic linkages in glycogen by scission of a 1,4-alpha-linked oligosaccharide from growing alpha-1,4-glucan chains and the subsequent attachment of the oligosaccharide to the alpha-1,6 position. The protein is 1,4-alpha-glucan branching enzyme GlgB of Bacillus cereus (strain ATCC 10987 / NRS 248).